The chain runs to 252 residues: Type III pantothenate kinase (252 aa).

6–13 (DIGNTSTA) is a binding site for ATP. 104–107 (GADR) is a binding site for substrate. Asp106 (proton acceptor) is an active-site residue. Asp128 is a K(+) binding site. Residue Thr131 participates in ATP binding. Thr183 contacts substrate.

This sequence belongs to the type III pantothenate kinase family. In terms of assembly, homodimer. NH4(+) serves as cofactor. K(+) is required as a cofactor.

The protein localises to the cytoplasm. It carries out the reaction (R)-pantothenate + ATP = (R)-4'-phosphopantothenate + ADP + H(+). It participates in cofactor biosynthesis; coenzyme A biosynthesis; CoA from (R)-pantothenate: step 1/5. Functionally, catalyzes the phosphorylation of pantothenate (Pan), the first step in CoA biosynthesis. This chain is Type III pantothenate kinase, found in Thermus thermophilus (strain ATCC BAA-163 / DSM 7039 / HB27).